The chain runs to 429 residues: MSRSAPLLLNPISAISGTVNVPGSKSLSNRALLLAAVANGETHLTNLLDSEDIRHMLKALTQLGVNYRLSDDKTECWVQGLGRGFSVDNLETLFLGNAGTAMRPLCAVLATSIGEFELTGEPRMEERPIGALVDSLRQAGAQITYLKNEGYPPLKMKGMALKGGNISVEGAVSSQFLTALLMAAPLFEHDSVINIVGELVSKPYIDITLNTMAQFGITVENNNYQSFTVKGNQQYQAAGDFLVEGDASSASYFLAAGAIKGGTVRVTGVGKKSIQGDIRFADVLEKMGAKITWGDDYIEVTGAPLTAVDMDMNHIPDAAMTIATTALFAEGTTSIRNIYNWRVKETDRLAAMACELRKVGAEVIEGQDYITITPPNTLIQTDIDTYDDHRVAMCFSLVALSDTPVTINDPDCTAKTFPDYFTRLKQISA.

3-phosphoshikimate is bound by residues lysine 25, serine 26, and arginine 30. Position 25 (lysine 25) interacts with phosphoenolpyruvate. Phosphoenolpyruvate contacts are provided by glycine 99 and arginine 127. 3-phosphoshikimate-binding residues include serine 173, serine 174, glutamine 175, serine 201, aspartate 317, asparagine 340, and lysine 344. Glutamine 175 lines the phosphoenolpyruvate pocket. Catalysis depends on aspartate 317, which acts as the Proton acceptor. Phosphoenolpyruvate-binding residues include arginine 348, arginine 390, and lysine 415.

The protein belongs to the EPSP synthase family. Monomer.

The protein resides in the cytoplasm. It carries out the reaction 3-phosphoshikimate + phosphoenolpyruvate = 5-O-(1-carboxyvinyl)-3-phosphoshikimate + phosphate. It participates in metabolic intermediate biosynthesis; chorismate biosynthesis; chorismate from D-erythrose 4-phosphate and phosphoenolpyruvate: step 6/7. Catalyzes the transfer of the enolpyruvyl moiety of phosphoenolpyruvate (PEP) to the 5-hydroxyl of shikimate-3-phosphate (S3P) to produce enolpyruvyl shikimate-3-phosphate and inorganic phosphate. The polypeptide is 3-phosphoshikimate 1-carboxyvinyltransferase (Pseudoalteromonas atlantica (strain T6c / ATCC BAA-1087)).